The following is a 441-amino-acid chain: tRNA pseudouridine synthase Pus10 (441 aa).

Asp-268 (nucleophile) is an active-site residue. 2 residues coordinate substrate: Tyr-333 and Tyr-405.

The protein belongs to the pseudouridine synthase Pus10 family.

It catalyses the reaction uridine(54) in tRNA = pseudouridine(54) in tRNA. The catalysed reaction is uridine(55) in tRNA = pseudouridine(55) in tRNA. Functionally, responsible for synthesis of pseudouridine from uracil-54 and uracil-55 in the psi GC loop of transfer RNAs. The chain is tRNA pseudouridine synthase Pus10 from Thermosphaera aggregans (strain DSM 11486 / M11TL).